A 206-amino-acid polypeptide reads, in one-letter code: FKBP-type 22 kDa peptidyl-prolyl cis-trans isomerase (206 aa).

The PPIase FKBP-type domain occupies 120-206 (TDRVRVHYTG…VFEVELLEIL (87 aa)).

Homodimer.

It is found in the cytoplasm. The protein resides in the periplasm. The enzyme catalyses [protein]-peptidylproline (omega=180) = [protein]-peptidylproline (omega=0). Its activity is regulated as follows. Strongly inhibited by FK506. Functionally, PPIases accelerate the folding of proteins. Catalyzes the cis-trans isomerization of proline imidic peptide bonds in oligopeptides. Displays a preference for substrates with a lysyl residue in the P1 position. The sequence is that of FKBP-type 22 kDa peptidyl-prolyl cis-trans isomerase (fklB) from Escherichia coli (strain K12).